A 168-amino-acid polypeptide reads, in one-letter code: Large ribosomal subunit protein uL10 (168 aa).

Belongs to the universal ribosomal protein uL10 family. As to quaternary structure, part of the ribosomal stalk of the 50S ribosomal subunit. The N-terminus interacts with L11 and the large rRNA to form the base of the stalk. The C-terminus forms an elongated spine to which L12 dimers bind in a sequential fashion forming a multimeric L10(L12)X complex.

Functionally, forms part of the ribosomal stalk, playing a central role in the interaction of the ribosome with GTP-bound translation factors. The protein is Large ribosomal subunit protein uL10 of Ralstonia nicotianae (strain ATCC BAA-1114 / GMI1000) (Ralstonia solanacearum).